A 152-amino-acid polypeptide reads, in one-letter code: Ribosomal RNA large subunit methyltransferase H (152 aa).

Residues Leu69, Gly96, and 118–123 each bind S-adenosyl-L-methionine; that span reads FGKLTF.

Belongs to the RNA methyltransferase RlmH family. In terms of assembly, homodimer.

It localises to the cytoplasm. The catalysed reaction is pseudouridine(1915) in 23S rRNA + S-adenosyl-L-methionine = N(3)-methylpseudouridine(1915) in 23S rRNA + S-adenosyl-L-homocysteine + H(+). Its function is as follows. Specifically methylates the pseudouridine at position 1915 (m3Psi1915) in 23S rRNA. This chain is Ribosomal RNA large subunit methyltransferase H, found in Mesomycoplasma hyopneumoniae (strain 232) (Mycoplasma hyopneumoniae).